The following is a 355-amino-acid chain: 3,4-dihydroxy-2-butanone 4-phosphate synthase (355 aa).

Positions 1 to 202 (MYHKRIKEAI…VSDIIQYRLN (202 aa)) are DHBP synthase. Residues 27 to 28 (RE), aspartate 32, 139 to 143 (RTGHT), and glutamate 163 contribute to the D-ribulose 5-phosphate site. Glutamate 28 provides a ligand contact to Mg(2+). Mg(2+) is bound at residue histidine 142. The tract at residues 203-355 (FENLLREITR…NLHLVEKIEV (153 aa)) is GTP cyclohydrolase II-like.

In the N-terminal section; belongs to the DHBP synthase family. It in the C-terminal section; belongs to the GTP cyclohydrolase II family. Mg(2+) serves as cofactor. It depends on Mn(2+) as a cofactor.

It catalyses the reaction D-ribulose 5-phosphate = (2S)-2-hydroxy-3-oxobutyl phosphate + formate + H(+). It functions in the pathway cofactor biosynthesis; riboflavin biosynthesis; 2-hydroxy-3-oxobutyl phosphate from D-ribulose 5-phosphate: step 1/1. Catalyzes the conversion of D-ribulose 5-phosphate to formate and 3,4-dihydroxy-2-butanone 4-phosphate. This chain is 3,4-dihydroxy-2-butanone 4-phosphate synthase (ribB), found in Helicobacter hepaticus (strain ATCC 51449 / 3B1).